The sequence spans 136 residues: Class I hydrophobin A (136 aa).

Residues 1 to 16 (MRFALAITTLIAAVTA) form the signal peptide. 4 disulfide bridges follow: cysteine 39-cysteine 109, cysteine 47-cysteine 103, cysteine 48-cysteine 85, and cysteine 110-cysteine 128.

The protein belongs to the fungal hydrophobin family. Expressed in aerial conidia, in vitro blastospores, submerged conidia, and cells sporulating on chitin and insect cuticle, with hyd1 expression peaking in growing mycelia.

It is found in the secreted. The protein resides in the cell wall. Its subcellular location is the spore coat. It localises to the vacuole. The protein localises to the cytoplasmic vesicle. Aerial growth, conidiation, and dispersal of filamentous fungi in the environment rely upon a capability of their secreting small amphipathic proteins called hydrophobins (HPBs) with low sequence identity. Class I can self-assemble into an outermost layer of rodlet bundles on aerial cell surfaces, conferring cellular hydrophobicity that supports fungal growth, development and dispersal; whereas Class II form highly ordered films at water-air interfaces through intermolecular interactions but contribute nothing to the rodlet structure. Hyd1A contributes to certain cell wall-related features, such as hydrophobicity but is not involved in cell wall-related events during fungal proliferation in host hemocoel. Hyd1A and hyd1B coregulate the formation, morphology and orderly assembly of rodlet bundles required for conidial hydrophobicity and infectivity. Contributes to the spore coat rodlet layer. This Beauveria bassiana (strain ARSEF 2860) (White muscardine disease fungus) protein is Class I hydrophobin A.